The chain runs to 1340 residues: MEVQSLLNFDLDPGPVDQSILVWQHEHRSAAIWEDEVPPRELTCRHKLLGMRDWPLDPLVCQKLIEFGLYGVYKVAFIQLDYALITALVERWRPETHTFHLPAGEITVTLQDVNILLGLRVDGPAVTGSTKYNWADLCEDLLGHRPGPKDLHGSHVSLAWLRENFRNLPADPDEVTLKCHTRAFVLALMSGFLYGDKSKHDVALTFLPLLRDFDEVAKLSWGSATLALLYRELCRASKRTVSTICGPLVLLQLWAWERLHVGRPGRLKDVGASYMDGIDGPLPDPLGCRWRASLSHKENPRGGLDFYRDQFDQQKDEQVIWQPYTPDLLAKIPLICVSGENIWRTVAPLICFDVVEWHRPDRVLRQFGLHQTIPAPCDNEKALHAIDKRGKSEYDWSARHSRHIGLWEARVSSVVSGEPECSPMDYNDPYMEWYRRITRRIISPMNERRPGQFLPTGFAFQVLVQRVAAIHARSRASLEEELTVGSARQTLQDIVDMCAGALQLNAPLGSLSNGSVAQAPTPEPFLMLPQPTPTIIPQKPMGGEMVCLPLNDMEIDDGLAAEPLELMPPVQDIGCEQSLSSVSQKPLFWPSGGKLTFSWVCEVMLVFDWSSKNLPPCEFSSVLPFNVLDELVLFASKILKKEPNCVRIDSEKAEVVVVGDLHGQLHDLLYLMQDAGFPDGDRFYVFNGNYVDIGAWGLETFLLLLSWKVLLPARVYLLRGSHESESCTSMYGFKNEVLTKYGDKGAAVYKKCLECFQLLPLASVIAGKVYTAHGGLFRDVSSFLSDKQERNRKRKRTQKKQTDNTVLDTEDRSESLPLGSLKDLSKVKRRVIDPPTEGSNLIPGDILWSDPSKDTGLFLNKERGIGLLWGPDCTAKFLQDNNLKWIIRGKGAPDERAKRDDLAPMNGGYAEDHEGLITLFSAPDHPQFQDTEERHNNKAAYIILQIPECEELKFQPLEAVSPRPKAEAYYDFRRLIHPPSNLVHNITNSVDSPSSVPDDKDNLISSENVEYKSMDLSEQMEVDEKDDVDSKYSESITDEVAAFGTPASGDRDMVDFSDKTENGSKEADHSETAEISKDLSDTVGKPESCSRTRGTYEAIGTDAKLKSNTPEAINLEPQPGCDLYVPDSGNSTESRTEKAAEEACVGRISIDDCSTTGDAAVELEITYDEKLDRVVTEITGNDAAECMTDGNRDIATDGAENLEPSTSKLNYSEPSEDIDDSTMKFRHNTSCVADSDLETVNGGVNADCSSSSKCLTSKPVVAHDKFTNLTKPSHDKGYGESADKPERVIKLVTYSKRKSSDKKHMIESNEDPQQKVNDSVDSKNKGSLDKSQSVPGDMDS.

Mn(2+)-binding residues include D660 and H662. The active-site Proton donor is H722. Residue H773 coordinates Mn(2+). Disordered regions lie at residues Q788–E814, K1012–R1093, T1196–I1218, and F1266–S1340. Residues R790 to K799 show a composition bias toward basic residues. Positions E1018 to D1027 are enriched in acidic residues. Residues G1049 to S1080 show a composition bias toward basic and acidic residues. The span at E1203 to E1213 shows a compositional bias: polar residues. 2 stretches are compositionally biased toward basic and acidic residues: residues F1266–I1289 and D1318–L1328.

This sequence belongs to the PPP phosphatase family. PP-7 subfamily. Requires Mn(2+) as cofactor. In terms of tissue distribution, expressed in root tips, the shoot apical meristem (SAM), leaf vasculature, hydathodes and mature flowers.

The protein resides in the nucleus. The enzyme catalyses O-phospho-L-seryl-[protein] + H2O = L-seryl-[protein] + phosphate. It catalyses the reaction O-phospho-L-threonyl-[protein] + H2O = L-threonyl-[protein] + phosphate. Functionally, maybe required to maintain cell division activity in meristematic cells. In Arabidopsis thaliana (Mouse-ear cress), this protein is Serine/threonine-protein phosphatase 7 long form homolog.